The following is a 352-amino-acid chain: DNA polymerase IV (352 aa).

The region spanning 4–185 (IIHVDMDCFY…LPLEKIPGVG (182 aa)) is the UmuC domain. Residues Asp-8 and Asp-103 each coordinate Mg(2+). Glu-104 is an active-site residue.

Belongs to the DNA polymerase type-Y family. Monomer. Mg(2+) is required as a cofactor.

It is found in the cytoplasm. It catalyses the reaction DNA(n) + a 2'-deoxyribonucleoside 5'-triphosphate = DNA(n+1) + diphosphate. In terms of biological role, poorly processive, error-prone DNA polymerase involved in untargeted mutagenesis. Copies undamaged DNA at stalled replication forks, which arise in vivo from mismatched or misaligned primer ends. These misaligned primers can be extended by PolIV. Exhibits no 3'-5' exonuclease (proofreading) activity. May be involved in translesional synthesis, in conjunction with the beta clamp from PolIII. The sequence is that of DNA polymerase IV from Pectobacterium atrosepticum (strain SCRI 1043 / ATCC BAA-672) (Erwinia carotovora subsp. atroseptica).